The following is a 204-amino-acid chain: Large ribosomal subunit protein eL15 (204 aa).

The protein belongs to the eukaryotic ribosomal protein eL15 family. As to quaternary structure, component of the large ribosomal subunit.

It localises to the cytoplasm. Its function is as follows. Component of the large ribosomal subunit. The ribosome is a large ribonucleoprotein complex responsible for the synthesis of proteins in the cell. The chain is Large ribosomal subunit protein eL15 (rpl15) from Carassius auratus (Goldfish).